The chain runs to 622 residues: MMEPPLSKRNPPALRLADLATAQAQQLQNMTGFPVLVGPPAHSQRRAVAMHLHPRDLGTDPGVASTALGPEHMAQASGQGPCPPSQGLPGLFQVPAPAARSVASGTHPGARTHPDGGGSSGAQASAPPPPAPPLPPSQSSSPPPPPPPPPALSGYTATNSGGGSSSGKGHSRDFVLRRDLSATAPAAAMHGAPLGGEQRSGSSSPQHPTPPPHPAGMFISASGTYAGRDGGGSALFPALHDSPGAPGGHPLNGQMRLGLAAAAAAAAELYGRAEPPFAPRSGDAHYGAVAAAAAAALHGYGAVNLNLNLAAAAAAAAAAGPGPHLQHHAPPPAPPPAPAPHPHHPHLPGAAGAFLRYMRQPIKRELICKWLDPEELAGPPASADSGVKPCSKTFGTMHELVNHVTVEHVGGPEQSSHVCFWEDCPREGKPFKAKYKLINHIRVHTGEKPFPCPFPGCGKVFARSENLKIHKRTHTGEKPFKCEFDGCDRKFANSSDRKKHSHVHTSDKPYYCKIRGCDKSYTHPSSLRKHMKIHCKSPPPSPGALGYSSVGTPVGDPLSPVLDPTRSRSSTLSPQVTNLNEWYVCQASGAPSHLHTPSSNGTTSESEDEEMYGNPEVMRTIH.

4 disordered regions span residues 50 to 171 (MHLH…KGHS), 190 to 223 (HGAPLGGEQRSGSSSPQHPTPPPHPAGMFISASG), 232 to 251 (GSALFPALHDSPGAPGGHPL), and 321 to 349 (PGPHLQHHAPPPAPPPAPAPHPHHPHLPG). The segment covering 126–151 (APPPPAPPLPPSQSSSPPPPPPPPPA) has biased composition (pro residues). Pro residues predominate over residues 329 to 340 (APPPAPPPAPAP). The C2H2-type 1; degenerate zinc finger occupies 422-444 (EDCPREGKPFKAKYKLINHIRVH). 3 C2H2-type zinc fingers span residues 450–474 (FPCPFPGCGKVFARSENLKIHKRTH), 480–504 (FKCEFDGCDRKFANSSDRKKHSHVH), and 510–534 (YYCKIRGCDKSYTHPSSLRKHMKIH). 2 disordered regions span residues 531 to 573 (MKIH…STLS) and 590 to 622 (APSHLHTPSSNGTTSESEDEEMYGNPEVMRTIH). Phosphoserine occurs at positions 537, 541, and 559. A compositionally biased stretch (polar residues) spans 595–604 (HTPSSNGTTS).

The protein belongs to the GLI C2H2-type zinc-finger protein family.

Its subcellular location is the nucleus. Its function is as follows. Essential for neural crest development, converting cells from an epidermal fate to a neural crest cell fate. Binds to DNA. The chain is Zinc finger protein ZIC 5 (Zic5) from Mus musculus (Mouse).